Consider the following 783-residue polypeptide: uncharacterized protein (783 aa).

Residues M1 to D22 are disordered. Topologically, residues M1–R109 are cytoplasmic. A helical; Signal-anchor for type II membrane protein transmembrane segment spans residues R110 to S127. Over D128–F783 the chain is Extracellular. N-linked (GlcNAc...) asparagine glycans are attached at residues N139 and N213. In terms of domain architecture, PA spans H241 to W333. N529 carries an N-linked (GlcNAc...) asparagine glycan.

It localises to the cell membrane. This is an uncharacterized protein from Saccharomyces cerevisiae (strain ATCC 204508 / S288c) (Baker's yeast).